A 548-amino-acid polypeptide reads, in one-letter code: T-complex protein 1 subunit theta (548 aa).

Ala-2 is modified (N-acetylalanine). The ADP site is built by Tyr-47 and Gly-48. Asp-99 provides a ligand contact to Mg(2+). 9 residues coordinate ADP: Gly-100, Thr-101, Asn-102, Phe-103, Met-169, Ser-170, Lys-171, Gly-412, and Asp-499. The ATP site is built by Gly-100, Thr-101, and Asn-102. The ATP site is built by Ser-170, Lys-171, Gly-412, Asp-499, and Lys-504. Position 505 is a phosphotyrosine (Tyr-505). The segment at 529 to 548 (PAGGPKPPSGKKDWDEDQND) is disordered.

Component of the chaperonin-containing T-complex (TRiC), a hexadecamer composed of two identical back-to-back stacked rings enclosing a protein folding chamber. Each ring is made up of eight different subunits: TCP1/CCT1, CCT2, CCT3, CCT4, CCT5, CCT6A/CCT6, CCT7, CCT8.

The protein localises to the cytoplasm. It is found in the cytoskeleton. Its subcellular location is the microtubule organizing center. The protein resides in the centrosome. It localises to the cilium basal body. The enzyme catalyses ATP + H2O = ADP + phosphate + H(+). Its function is as follows. Component of the chaperonin-containing T-complex (TRiC), a molecular chaperone complex that assists the folding of actin, tubulin and other proteins upon ATP hydrolysis. This Gallus gallus (Chicken) protein is T-complex protein 1 subunit theta.